A 355-amino-acid chain; its full sequence is 3'-5' exonuclease (355 aa).

A disordered region spans residues 1 to 119 (MDKFLIKMPI…TPSPEKVKPE (119 aa)). 2 stretches are compositionally biased toward basic and acidic residues: residues 13 to 29 (KNNETPEQKPIVKKETP) and 71 to 91 (KNLDTLEVNTEKNTAESENPP). 2 positions are modified to phosphoserine: Ser104 and Ser112. The 3'-5' exonuclease domain maps to 154–315 (TDVDVVPMAF…GQVIYRDLEQ (162 aa)). Asp164, Glu166, and Asp302 together coordinate Mg(2+).

Belongs to the WRNexo family.

It localises to the nucleus. Has exonuclease activity on both single-stranded and duplex templates bearing overhangs, but not blunt ended duplex DNA, and cleaves in a 3'-5' direction. Essential for the formation of DNA replication focal centers. Has an important role in maintaining genome stability. This Drosophila persimilis (Fruit fly) protein is 3'-5' exonuclease.